Reading from the N-terminus, the 196-residue chain is Putative NADH dehydrogenase/NAD(P)H nitroreductase XCV0587 (196 aa).

Belongs to the nitroreductase family. HadB/RutE subfamily. FMN is required as a cofactor.

This Xanthomonas euvesicatoria pv. vesicatoria (strain 85-10) (Xanthomonas campestris pv. vesicatoria) protein is Putative NADH dehydrogenase/NAD(P)H nitroreductase XCV0587.